Consider the following 683-residue polypeptide: Phenoloxidase 3 (683 aa).

Residues 1–48 (MADKKNLLLLFDHPTEPVFMDKGGNGTVFDVPDSYVTDRYNQMCKKVQ) constitute a propeptide that is removed on maturation. Residues histidine 209, histidine 213, and histidine 239 each contribute to the Cu cation site. Glutamate 351 (proton acceptor) is an active-site residue. Asparagine 358 carries N-linked (GlcNAc...) asparagine glycosylation. Residues histidine 366, histidine 370, and histidine 406 each contribute to the Cu cation site. N-linked (GlcNAc...) asparagine glycans are attached at residues asparagine 492 and asparagine 546. 2 disulfides stabilise this stretch: cysteine 574–cysteine 617 and cysteine 576–cysteine 624.

It belongs to the tyrosinase family. Cu(2+) serves as cofactor. Upon activation, a trypsin type protease cleaves prophenol oxidase to yield the active enzyme.

It localises to the secreted. It catalyses the reaction 2 L-dopa + O2 = 2 L-dopaquinone + 2 H2O. It carries out the reaction L-tyrosine + O2 = L-dopaquinone + H2O. In terms of biological role, this is a copper-containing oxidase that functions in the formation of pigments such as melanins and other polyphenolic compounds. Catalyzes the rate-limiting conversions of tyrosine to DOPA, DOPA to DOPA-quinone and possibly 5,6 dihydroxyindole to indole-5'6 quinone. In Drosophila melanogaster (Fruit fly), this protein is Phenoloxidase 3 (PPO3).